Here is a 502-residue protein sequence, read N- to C-terminus: Alpha-ketoglutarate-dependent dioxygenase FTO (502 aa).

The fe2OG dioxygenase domain stretch occupies residues 32 to 324 (TPKDDEFYQQ…SSTHRVAECS (293 aa)). Arginine 96 and tyrosine 108 together coordinate substrate. 2-oxoglutarate is bound at residue asparagine 202. Residues 210–221 (PYLKEEPYFGMG) are loop L1; predicted to block binding of double-stranded DNA or RNA. Residue lysine 213 is modified to N6-acetyllysine. Fe cation contacts are provided by histidine 228 and aspartate 230. 228–231 (HHDE) provides a ligand contact to substrate. 2-oxoglutarate is bound at residue tyrosine 292. Histidine 304 serves as a coordination point for Fe cation. Residues 313–315 (RFS), threonine 317, and arginine 319 contribute to the 2-oxoglutarate site.

Belongs to the fto family. As to quaternary structure, monomer. May also exist as homodimer. Fe(2+) serves as cofactor. As to expression, ubiquitous. Detected in brain, brain cortex, hypothalamus, cerebellum, liver, pancreas, heart, kidney, white adipose tissue and skeletal muscle. Most abundant in the brain, particularly in hypothalamic nuclei governing energy balance.

The protein localises to the nucleus. Its subcellular location is the nucleus speckle. It localises to the cytoplasm. It carries out the reaction a 5'-end (N(7)-methyl 5'-triphosphoguanosine)-(N(6),2'-O-dimethyladenosine) in mRNA + 2-oxoglutarate + O2 = a 5'-end (N(7)-methyl 5'-triphosphoguanosine)-(2'-O-methyladenosine) in mRNA + formaldehyde + succinate + CO2. The enzyme catalyses an N(6)-methyladenosine in mRNA + 2-oxoglutarate + O2 = an adenosine in mRNA + formaldehyde + succinate + CO2. The catalysed reaction is N(6)-methyladenosine in U6 snRNA + 2-oxoglutarate + O2 = adenosine in U6 snRNA + formaldehyde + succinate + CO2. It catalyses the reaction a 5'-end (N(7)-methyl 5'-triphosphoguanosine)-(N(6),2'-O-dimethyladenosine) in U6 snRNA + 2-oxoglutarate + O2 = a 5'-end (N(7)-methyl 5'-triphosphoguanosine)-(2'-O-methyladenosine) in U6 snRNA + formaldehyde + succinate + CO2. It carries out the reaction an N(1)-methyladenosine in tRNA + 2-oxoglutarate + O2 = an adenosine in tRNA + formaldehyde + succinate + CO2. Its activity is regulated as follows. Activated by ascorbate. Inhibited by N-oxalylglycine, fumarate and succinate. In terms of biological role, RNA demethylase that mediates oxidative demethylation of different RNA species, such as mRNAs, tRNAs and snRNAs, and acts as a regulator of fat mass, adipogenesis and energy homeostasis. Specifically demethylates N(6)-methyladenosine (m6A) RNA, the most prevalent internal modification of messenger RNA (mRNA) in higher eukaryotes. M6A demethylation by FTO affects mRNA expression and stability. Also able to demethylate m6A in U6 small nuclear RNA (snRNA). Mediates demethylation of N(6),2'-O-dimethyladenosine cap (m6A(m)), by demethylating the N(6)-methyladenosine at the second transcribed position of mRNAs and U6 snRNA. Demethylation of m6A(m) in the 5'-cap by FTO affects mRNA stability by promoting susceptibility to decapping. Also acts as a tRNA demethylase by removing N(1)-methyladenine from various tRNAs. Has no activity towards 1-methylguanine. Has no detectable activity towards double-stranded DNA. Also able to repair alkylated DNA and RNA by oxidative demethylation: demethylates single-stranded RNA containing 3-methyluracil, single-stranded DNA containing 3-methylthymine and has low demethylase activity towards single-stranded DNA containing 1-methyladenine or 3-methylcytosine. Ability to repair alkylated DNA and RNA is however unsure in vivo. Involved in the regulation of fat mass, adipogenesis and body weight, thereby contributing to the regulation of body size and body fat accumulation. Involved in the regulation of thermogenesis and the control of adipocyte differentiation into brown or white fat cells. Regulates activity of the dopaminergic midbrain circuitry via its ability to demethylate m6A in mRNAs. This Mus musculus (Mouse) protein is Alpha-ketoglutarate-dependent dioxygenase FTO.